A 617-amino-acid polypeptide reads, in one-letter code: Guanylate cyclase soluble subunit beta-2 (617 aa).

His26 contributes to the heme binding site. The Guanylate cyclase domain occupies 391 to 519; sequence TILFSDVVTF…DTVNTASRME (129 aa). Positions 577-586 are enriched in basic and acidic residues; it reads RSKTPVDHKG. The tract at residues 577-605 is disordered; it reads RSKTPVDHKGSTQKASLPTTKLQGSVQPS. The span at 588–604 shows a compositional bias: polar residues; sequence TQKASLPTTKLQGSVQP.

Belongs to the adenylyl cyclase class-4/guanylyl cyclase family. As to quaternary structure, heterodimer of an alpha and a beta chain. It depends on heme as a cofactor. In terms of tissue distribution, expressed in gastric signet ring cell carcinoma, but not in the normal stomach.

The protein localises to the cytoplasm. The catalysed reaction is GTP = 3',5'-cyclic GMP + diphosphate. Activated by nitric oxide in the presence of magnesium or manganese ions. The sequence is that of Guanylate cyclase soluble subunit beta-2 (GUCY1B2) from Homo sapiens (Human).